Here is a 138-residue protein sequence, read N- to C-terminus: Transcription antitermination protein NusB (138 aa).

It belongs to the NusB family.

In terms of biological role, involved in transcription antitermination. Required for transcription of ribosomal RNA (rRNA) genes. Binds specifically to the boxA antiterminator sequence of the ribosomal RNA (rrn) operons. The polypeptide is Transcription antitermination protein NusB (Helicobacter pylori (strain G27)).